We begin with the raw amino-acid sequence, 437 residues long: Phosphoethanolamine N-methyltransferase 2 (437 aa).

N-methylethanolamine phosphate contacts are provided by residues 186-187 and Y195; that span reads QY. Residues 204–205, G232, D254, 281–282, and R298 contribute to the S-adenosyl-L-homocysteine site; these read IS and DA. N-methylethanolamine phosphate is bound by residues Y329, Y343, 347 to 349, and K415; that span reads RAY.

It belongs to the class I-like SAM-binding methyltransferase superfamily.

The enzyme catalyses N-methylethanolamine phosphate + S-adenosyl-L-methionine = N,N-dimethylethanolamine phosphate + S-adenosyl-L-homocysteine + H(+). The catalysed reaction is N,N-dimethylethanolamine phosphate + S-adenosyl-L-methionine = phosphocholine + S-adenosyl-L-homocysteine + H(+). It participates in phospholipid metabolism; phosphatidylcholine biosynthesis; phosphocholine from phosphoethanolamine. With respect to regulation, feedback inhibition by phosphatidylcholine and also by S-adenosylhomocysteine. In terms of biological role, catalyzes the last two methylation reactions in the synthesis of phosphocholine, by converting phospho-monomethylethanolamine (N-methylethanolamine phosphate) into phospho-dimethylethanolamine (N,N-dimethylethanolamine phosphate) and the latter into phosphocholine. Phosphocholine is a precursor for phosphatidylcholine, a major component in membranes and a precursor itself in the production of glycoconjugates secreted by parasitic nematodes to avoid host immune responses. In Caenorhabditis elegans, this protein is Phosphoethanolamine N-methyltransferase 2.